The following is a 536-amino-acid chain: Chaperonin GroEL (536 aa).

Residues 30–33 (TLGP), 86–90 (DGTTT), G414, and D494 each bind ATP.

The protein belongs to the chaperonin (HSP60) family. As to quaternary structure, forms a cylinder of 14 subunits composed of two heptameric rings stacked back-to-back. Interacts with the co-chaperonin GroES.

It localises to the cytoplasm. The enzyme catalyses ATP + H2O + a folded polypeptide = ADP + phosphate + an unfolded polypeptide.. In terms of biological role, together with its co-chaperonin GroES, plays an essential role in assisting protein folding. The GroEL-GroES system forms a nano-cage that allows encapsulation of the non-native substrate proteins and provides a physical environment optimized to promote and accelerate protein folding. This is Chaperonin GroEL from Methanosarcina barkeri (strain Fusaro / DSM 804).